The chain runs to 444 residues: Coagulation factor VII (444 aa).

The signal sequence occupies residues 1–21 (MAPQARGLGLCSLLALQASLA). Residues 22–39 (AVFITQEEAHSVLRRQRR) constitute a propeptide that is removed on maturation. Positions 40 to 84 (ANSFLEELRPGSLERECKEELCSFEEAREVFQSTERTKQFWITYN) constitute a Gla domain. 4-carboxyglutamate is present on residues Glu-45, Glu-46, Glu-53, Glu-55, Glu-58, Glu-59, Glu-64, Glu-65, Glu-68, and Glu-74. A disulfide bond links Cys-56 and Cys-61. The 37-residue stretch at 85-121 (DGDQCASNPCQNGGSCEDQIQSYICFCLADFEGRNCE) folds into the EGF-like 1; calcium-binding domain. Cystine bridges form between Cys-89/Cys-100, Cys-94/Cys-109, Cys-111/Cys-120, Cys-130/Cys-141, Cys-137/Cys-151, Cys-153/Cys-166, Cys-174/Cys-301, Cys-198/Cys-203, and Cys-217/Cys-233. Ser-91 carries an O-linked (Glc...) serine; alternate glycan. An O-linked (Xyl...) serine; alternate glycan is attached at Ser-91. A glycan (O-linked (Fuc) serine) is linked at Ser-99. Position 102 is a (3R)-3-hydroxyaspartate (Asp-102). Residues 126-167 (DQLICMYENGGCEQYCSDHVGSQRSCRCHEGYTLLPNGVSCT) enclose the EGF-like 2 domain. The 240-residue stretch at 192–431 (IVGGKVCPKG…YTEWLSRLMR (240 aa)) folds into the Peptidase S1 domain. N-linked (GlcNAc...) asparagine glycosylation occurs at Asn-211. The Charge relay system role is filled by His-232. Asn-242 carries N-linked (GlcNAc...) asparagine glycosylation. Asp-281 acts as the Charge relay system in catalysis. An N-linked (GlcNAc...) asparagine glycan is attached at Asn-306. Cys-349 and Cys-368 are joined by a disulfide. Asp-377 contributes to the substrate binding site. A disulfide bond links Cys-379 and Cys-407. The Charge relay system role is filled by Ser-383.

The protein belongs to the peptidase S1 family. Heterodimer of a light chain and a heavy chain linked by a disulfide bond. The vitamin K-dependent, enzymatic carboxylation of some glutamate residues allows the modified protein to bind calcium. Post-translationally, the iron and 2-oxoglutarate dependent 3-hydroxylation of aspartate and asparagine is (R) stereospecific within EGF domains. In terms of processing, O-glycosylated. O-fucosylated by POFUT1 on a conserved serine or threonine residue found in the consensus sequence C2-X(4,5)-[S/T]-C3 of EGF domains, where C2 and C3 are the second and third conserved cysteines. Can be either O-glucosylated or O-xylosylated at Ser-91 by POGLUT1. In terms of tissue distribution, plasma.

It is found in the secreted. The enzyme catalyses Selective cleavage of Arg-|-Ile bond in factor X to form factor Xa.. In terms of biological role, initiates the extrinsic pathway of blood coagulation. Serine protease that circulates in the blood in a zymogen form. Factor VII is converted to factor VIIa by factor Xa, factor XIIa, factor IXa, or thrombin by minor proteolysis. In the presence of tissue factor and calcium ions, factor VIIa then converts factor X to factor Xa by limited proteolysis. Factor VIIa also converts factor IX to factor IXa in the presence of tissue factor and calcium. The sequence is that of Coagulation factor VII (F7) from Oryctolagus cuniculus (Rabbit).